The chain runs to 511 residues: Ribose import ATP-binding protein RbsA 3 (511 aa).

2 consecutive ABC transporter domains span residues 21 to 257 and 256 to 511; these read LEMR…VGRD and RDVE…TGNA. Residue 53-60 coordinates ATP; sequence GENGAGKS.

The protein belongs to the ABC transporter superfamily. Ribose importer (TC 3.A.1.2.1) family. As to quaternary structure, the complex is composed of an ATP-binding protein (RbsA), two transmembrane proteins (RbsC) and a solute-binding protein (RbsB).

The protein resides in the cell inner membrane. It catalyses the reaction D-ribose(out) + ATP + H2O = D-ribose(in) + ADP + phosphate + H(+). Part of the ABC transporter complex RbsABC involved in ribose import. Responsible for energy coupling to the transport system. The protein is Ribose import ATP-binding protein RbsA 3 of Rhizobium etli (strain ATCC 51251 / DSM 11541 / JCM 21823 / NBRC 15573 / CFN 42).